The chain runs to 383 residues: Queuine tRNA-ribosyltransferase (383 aa).

Catalysis depends on D92, which acts as the Proton acceptor. Residues 92-96 (DSGGF), D146, Q190, and G217 each bind substrate. Residues 248–254 (GVGKPED) are RNA binding. The Nucleophile role is filled by D267. The RNA binding; important for wobble base 34 recognition stretch occupies residues 272–276 (TRNAR). Residues C310, C312, C315, and H341 each contribute to the Zn(2+) site.

Belongs to the queuine tRNA-ribosyltransferase family. In terms of assembly, homodimer. Within each dimer, one monomer is responsible for RNA recognition and catalysis, while the other monomer binds to the replacement base PreQ1. It depends on Zn(2+) as a cofactor.

The catalysed reaction is 7-aminomethyl-7-carbaguanine + guanosine(34) in tRNA = 7-aminomethyl-7-carbaguanosine(34) in tRNA + guanine. Its pathway is tRNA modification; tRNA-queuosine biosynthesis. Its function is as follows. Catalyzes the base-exchange of a guanine (G) residue with the queuine precursor 7-aminomethyl-7-deazaguanine (PreQ1) at position 34 (anticodon wobble position) in tRNAs with GU(N) anticodons (tRNA-Asp, -Asn, -His and -Tyr). Catalysis occurs through a double-displacement mechanism. The nucleophile active site attacks the C1' of nucleotide 34 to detach the guanine base from the RNA, forming a covalent enzyme-RNA intermediate. The proton acceptor active site deprotonates the incoming PreQ1, allowing a nucleophilic attack on the C1' of the ribose to form the product. After dissociation, two additional enzymatic reactions on the tRNA convert PreQ1 to queuine (Q), resulting in the hypermodified nucleoside queuosine (7-(((4,5-cis-dihydroxy-2-cyclopenten-1-yl)amino)methyl)-7-deazaguanosine). In Psychrobacter cryohalolentis (strain ATCC BAA-1226 / DSM 17306 / VKM B-2378 / K5), this protein is Queuine tRNA-ribosyltransferase.